The primary structure comprises 180 residues: MLNLQVTGKTILSSIRCQRKMSSTCSSYAFGPYKIDPREVFYATPLSYAMVNLRPLLPAHVLVCPRRLVPRFTDLTADETSDLWLTAQKVGSKLETFHNASSLTLAIQDGPQAGQTVPHVHIHILPRKGGDFEKNDEIYDALDEKEKELKQKLDLDKDRVDRSIQEMADEASQYRSLFDC.

The HIT domain maps to 27–134 (SYAFGPYKID…LPRKGGDFEK (108 aa)). Substrate is bound by residues asparagine 52 and glutamine 108. The Histidine triad motif signature appears at 119–123 (HVHIH). The active-site Tele-AMP-histidine intermediate is histidine 121. Residue histidine 123 participates in substrate binding.

The enzyme catalyses P(1),P(3)-bis(5'-adenosyl) triphosphate + H2O = AMP + ADP + 2 H(+). It catalyses the reaction adenosine 5'-phosphosulfate + H2O = sulfate + AMP + 2 H(+). It carries out the reaction adenosine 5'-phosphosulfate + NH4(+) = adenosine 5'-phosphoramidate + sulfate + 2 H(+). The catalysed reaction is adenosine 5'-phosphoramidate + H2O = AMP + NH4(+). Possesses dinucleoside triphosphate hydrolase activity. Cleaves P(1)-P(3)-bis(5'-adenosyl) triphosphate (Ap3A) to yield AMP and ADP. Exhibits adenylylsulfatase activity, hydrolyzing adenosine 5'-phosphosulfate to yield AMP and sulfate. Exhibits adenosine 5'-monophosphoramidase activity, hydrolyzing purine nucleotide phosphoramidates with a single phosphate group such as adenosine 5'monophosphoramidate (AMP-NH2) to yield AMP and NH2. Exhibits adenylylsulfate-ammonia adenylyltransferase, catalyzing the ammonolysis of adenosine 5'-phosphosulfate resulting in the formation of adenosine 5'-phosphoramidate. The protein is Bifunctional bis(5'-adenosyl)-triphosphatase/adenylylsulfatase FHIT of Arabidopsis thaliana (Mouse-ear cress).